The primary structure comprises 599 residues: Elongation factor 4 (599 aa).

Residues 2–184 (KNIRNFSIIA…RLVRDIPPPQ (183 aa)) enclose the tr-type G domain. Residues 14–19 (DHGKST) and 131–134 (NKID) each bind GTP.

This sequence belongs to the TRAFAC class translation factor GTPase superfamily. Classic translation factor GTPase family. LepA subfamily.

It is found in the cell inner membrane. The enzyme catalyses GTP + H2O = GDP + phosphate + H(+). Functionally, required for accurate and efficient protein synthesis under certain stress conditions. May act as a fidelity factor of the translation reaction, by catalyzing a one-codon backward translocation of tRNAs on improperly translocated ribosomes. Back-translocation proceeds from a post-translocation (POST) complex to a pre-translocation (PRE) complex, thus giving elongation factor G a second chance to translocate the tRNAs correctly. Binds to ribosomes in a GTP-dependent manner. The chain is Elongation factor 4 from Salmonella arizonae (strain ATCC BAA-731 / CDC346-86 / RSK2980).